The following is a 251-amino-acid chain: DNA repair protein RecO (251 aa).

It belongs to the RecO family.

Its function is as follows. Involved in DNA repair and RecF pathway recombination. In Acidiphilium cryptum (strain JF-5), this protein is DNA repair protein RecO.